The sequence spans 439 residues: 23S rRNA (uracil(1939)-C(5))-methyltransferase RlmD (439 aa).

The TRAM domain maps to 10–69; that stretch reads KTQLNTRHQAVQVERLDHHGAGIAYLKKKPLFIDGALPGEEVVTQLVEEKSKFARGKLIK. [4Fe-4S] cluster contacts are provided by Cys82, Cys88, Cys91, and Cys169. Residues Gln272, Phe301, Asn306, Glu322, Asn349, and Asp370 each coordinate S-adenosyl-L-methionine. Catalysis depends on Cys396, which acts as the Nucleophile.

It belongs to the class I-like SAM-binding methyltransferase superfamily. RNA M5U methyltransferase family. RlmD subfamily.

It carries out the reaction uridine(1939) in 23S rRNA + S-adenosyl-L-methionine = 5-methyluridine(1939) in 23S rRNA + S-adenosyl-L-homocysteine + H(+). Catalyzes the formation of 5-methyl-uridine at position 1939 (m5U1939) in 23S rRNA. In Vibrio campbellii (strain ATCC BAA-1116), this protein is 23S rRNA (uracil(1939)-C(5))-methyltransferase RlmD.